We begin with the raw amino-acid sequence, 592 residues long: Medium-chain-fatty-acid--[acyl-carrier-protein] ligase JamA (592 aa).

The protein belongs to the ATP-dependent AMP-binding enzyme family.

It carries out the reaction a medium-chain fatty acid + holo-[ACP] + ATP = a medium-chain fatty acyl-[ACP] + AMP + diphosphate. The enzyme catalyses a medium-chain fatty acid + ATP + H(+) = a medium-chain fatty acyl-AMP + diphosphate. The catalysed reaction is a medium-chain fatty acyl-AMP + holo-[ACP] = a medium-chain fatty acyl-[ACP] + AMP + H(+). Functionally, ligase involved in the biosynthesis of jamaicamides, which show sodium channel blocking activity and fish toxicity. Initiates jamaicamide biosynthesis by the activation of the starter unit, 5-hexenoic acid, followed by the loading of the activated 5-hexenoic acid onto the acyl carrier protein JamC. In vitro, can also use 5-hexynoic acid, heptanoic acid, butanoic acid, hexanoic acid and benzoic acid. In Moorena producens (strain JHB), this protein is Medium-chain-fatty-acid--[acyl-carrier-protein] ligase JamA.